Here is a 396-residue protein sequence, read N- to C-terminus: Elongation factor Tu (396 aa).

In terms of domain architecture, tr-type G spans 11–205 (KPHVNIGTIG…VIDEYIPTPV (195 aa)). Residues 20–27 (GHVDHGKT) form a G1 region. 20–27 (GHVDHGKT) is a binding site for GTP. A Mg(2+)-binding site is contributed by Thr27. A G2 region spans residues 61–65 (GITIN). The G3 stretch occupies residues 82 to 85 (DAPG). Residues 82–86 (DAPGH) and 137–140 (NKTD) contribute to the GTP site. The tract at residues 137-140 (NKTD) is G4. A G5 region spans residues 175–177 (SAL).

This sequence belongs to the TRAFAC class translation factor GTPase superfamily. Classic translation factor GTPase family. EF-Tu/EF-1A subfamily. As to quaternary structure, monomer.

The protein resides in the cytoplasm. It catalyses the reaction GTP + H2O = GDP + phosphate + H(+). In terms of biological role, GTP hydrolase that promotes the GTP-dependent binding of aminoacyl-tRNA to the A-site of ribosomes during protein biosynthesis. This is Elongation factor Tu from Oenococcus oeni (strain ATCC BAA-331 / PSU-1).